The following is a 611-amino-acid chain: Probable methyltransferase PMT19 (611 aa).

The Cytoplasmic segment spans residues methionine 1–arginine 15. A helical; Signal-anchor for type II membrane protein membrane pass occupies residues leucine 16–lysine 36. Over threonine 37–lysine 611 the chain is Lumenal. N-linked (GlcNAc...) asparagine glycans are attached at residues asparagine 68, asparagine 97, asparagine 289, asparagine 408, asparagine 411, and asparagine 587.

It belongs to the methyltransferase superfamily.

Its subcellular location is the endoplasmic reticulum membrane. The protein is Probable methyltransferase PMT19 of Arabidopsis thaliana (Mouse-ear cress).